A 108-amino-acid polypeptide reads, in one-letter code: Nucleoid-associated protein BPP1222 (108 aa).

The disordered stretch occupies residues 86–108 (TSQEKMASVTAGMPLPPGMKLPF). Residues 99 to 108 (PLPPGMKLPF) show a composition bias toward pro residues.

This sequence belongs to the YbaB/EbfC family. Homodimer.

Its subcellular location is the cytoplasm. It is found in the nucleoid. Functionally, binds to DNA and alters its conformation. May be involved in regulation of gene expression, nucleoid organization and DNA protection. The sequence is that of Nucleoid-associated protein BPP1222 from Bordetella parapertussis (strain 12822 / ATCC BAA-587 / NCTC 13253).